Reading from the N-terminus, the 336-residue chain is Eukaryotic translation initiation factor 3 subunit I (336 aa).

5 WD repeats span residues 8-47 (GHER…RLGT), 50-91 (GHLG…KVWE), 146-185 (CNES…QLEN), 190-229 (EFDH…ILKT), and 287-326 (GHFG…FDFM).

Belongs to the eIF-3 subunit I family. Component of the eukaryotic translation initiation factor 3 (eIF-3) complex.

The protein localises to the cytoplasm. Functionally, component of the eukaryotic translation initiation factor 3 (eIF-3) complex, which is involved in protein synthesis of a specialized repertoire of mRNAs and, together with other initiation factors, stimulates binding of mRNA and methionyl-tRNAi to the 40S ribosome. The eIF-3 complex specifically targets and initiates translation of a subset of mRNAs involved in cell proliferation. The chain is Eukaryotic translation initiation factor 3 subunit I (tif34) from Aspergillus terreus (strain NIH 2624 / FGSC A1156).